Consider the following 728-residue polypeptide: 1,4-alpha-glucan branching enzyme GlgB (728 aa).

Catalysis depends on Asp-405, which acts as the Nucleophile. Glu-458 functions as the Proton donor in the catalytic mechanism.

This sequence belongs to the glycosyl hydrolase 13 family. GlgB subfamily. As to quaternary structure, monomer.

It catalyses the reaction Transfers a segment of a (1-&gt;4)-alpha-D-glucan chain to a primary hydroxy group in a similar glucan chain.. Its pathway is glycan biosynthesis; glycogen biosynthesis. Catalyzes the formation of the alpha-1,6-glucosidic linkages in glycogen by scission of a 1,4-alpha-linked oligosaccharide from growing alpha-1,4-glucan chains and the subsequent attachment of the oligosaccharide to the alpha-1,6 position. The sequence is that of 1,4-alpha-glucan branching enzyme GlgB from Escherichia coli O6:K15:H31 (strain 536 / UPEC).